Reading from the N-terminus, the 159-residue chain is Cyclic pyranopterin monophosphate synthase (159 aa).

Substrate contacts are provided by residues 74-76 (MCH) and 112-113 (ME). Asp127 is a catalytic residue.

This sequence belongs to the MoaC family. Homohexamer; trimer of dimers.

It carries out the reaction (8S)-3',8-cyclo-7,8-dihydroguanosine 5'-triphosphate = cyclic pyranopterin phosphate + diphosphate. It functions in the pathway cofactor biosynthesis; molybdopterin biosynthesis. Functionally, catalyzes the conversion of (8S)-3',8-cyclo-7,8-dihydroguanosine 5'-triphosphate to cyclic pyranopterin monophosphate (cPMP). The protein is Cyclic pyranopterin monophosphate synthase of Helicobacter hepaticus (strain ATCC 51449 / 3B1).